The sequence spans 135 residues: Phosphoribosyl-AMP cyclohydrolase (135 aa).

Asp-78 provides a ligand contact to Mg(2+). Cys-79 is a Zn(2+) binding site. Mg(2+) contacts are provided by Asp-80 and Asp-82. Cys-96 and Cys-103 together coordinate Zn(2+).

It belongs to the PRA-CH family. As to quaternary structure, homodimer. It depends on Mg(2+) as a cofactor. Requires Zn(2+) as cofactor.

Its subcellular location is the cytoplasm. It catalyses the reaction 1-(5-phospho-beta-D-ribosyl)-5'-AMP + H2O = 1-(5-phospho-beta-D-ribosyl)-5-[(5-phospho-beta-D-ribosylamino)methylideneamino]imidazole-4-carboxamide. The protein operates within amino-acid biosynthesis; L-histidine biosynthesis; L-histidine from 5-phospho-alpha-D-ribose 1-diphosphate: step 3/9. Functionally, catalyzes the hydrolysis of the adenine ring of phosphoribosyl-AMP. This chain is Phosphoribosyl-AMP cyclohydrolase, found in Cupriavidus metallidurans (strain ATCC 43123 / DSM 2839 / NBRC 102507 / CH34) (Ralstonia metallidurans).